The chain runs to 100 residues: Large ribosomal subunit protein eL14 (100 aa).

It belongs to the eukaryotic ribosomal protein eL14 family.

The protein is Large ribosomal subunit protein eL14 of Aeropyrum pernix (strain ATCC 700893 / DSM 11879 / JCM 9820 / NBRC 100138 / K1).